Reading from the N-terminus, the 179-residue chain is CASP-like protein 5A2 (179 aa).

Residues 1–24 (MNVSHASVHPVEDPPAAATEVENP) form a disordered region. Residues 1–38 (MNVSHASVHPVEDPPAAATEVENPPRVRMDDMEGMPGT) lie on the Cytoplasmic side of the membrane. Residues 39–59 (LLGLALRFFQFLFAAAALCVM) form a helical membrane-spanning segment. At 60–70 (ASTSDFPSVTA) the chain is on the extracellular side. The helical transmembrane segment at 71-91 (FCYLVAATGLQSLWSLALAMV) threads the bilayer. At 92–115 (DVYAIMVKRSLQNRRLVSLFAIGD) the chain is on the cytoplasmic side. The chain crosses the membrane as a helical span at residues 116-136 (GVTSTLTFAAACASAGITVLI). Topologically, residues 137 to 155 (DNDLNSCAQNHCVQFETST) are extracellular. The chain crosses the membrane as a helical span at residues 156-176 (ALAFISWFAALPSFLFNFWSL). Residues 177-179 (ASR) lie on the Cytoplasmic side of the membrane.

Belongs to the Casparian strip membrane proteins (CASP) family. As to quaternary structure, homodimer and heterodimers.

The protein resides in the cell membrane. The chain is CASP-like protein 5A2 from Arabidopsis thaliana (Mouse-ear cress).